Reading from the N-terminus, the 1050-residue chain is Isoleucine--tRNA ligase (1050 aa).

A 'HIGH' region motif is present at residues 45–56; the sequence is PYPSSPIPHIGT. The 'KMSKS' region signature appears at 594-598; it reads EMHKS. Lys-597 provides a ligand contact to ATP.

Belongs to the class-I aminoacyl-tRNA synthetase family. IleS type 2 subfamily. In terms of assembly, monomer. Zn(2+) serves as cofactor.

It is found in the cytoplasm. It catalyses the reaction tRNA(Ile) + L-isoleucine + ATP = L-isoleucyl-tRNA(Ile) + AMP + diphosphate. In terms of biological role, catalyzes the attachment of isoleucine to tRNA(Ile). As IleRS can inadvertently accommodate and process structurally similar amino acids such as valine, to avoid such errors it has two additional distinct tRNA(Ile)-dependent editing activities. One activity is designated as 'pretransfer' editing and involves the hydrolysis of activated Val-AMP. The other activity is designated 'posttransfer' editing and involves deacylation of mischarged Val-tRNA(Ile). This is Isoleucine--tRNA ligase from Sulfolobus acidocaldarius (strain ATCC 33909 / DSM 639 / JCM 8929 / NBRC 15157 / NCIMB 11770).